Consider the following 1164-residue polypeptide: WASH complex subunit 5 (1164 aa).

The protein belongs to the strumpellin family. Probable component of the WASH complex.

This chain is WASH complex subunit 5, found in Dictyostelium discoideum (Social amoeba).